The following is a 600-amino-acid chain: Fructan 1-exohydrolase (600 aa).

The signal sequence occupies residues 1–27 (MAQAWAFLLPVLFFGSYVTNLFLPTYA). Asp-73 is a catalytic residue. N-linked (GlcNAc...) asparagine glycosylation is found at Asn-166, Asn-234, and Asn-246. A disulfide bridge links Cys-444 with Cys-490. N-linked (GlcNAc...) asparagine glycosylation is present at Asn-565.

Belongs to the glycosyl hydrolase 32 family.

The catalysed reaction is Hydrolysis of terminal, non-reducing (2-&gt;1)-linked beta-D-fructofuranose residues in fructans.. Its activity is regulated as follows. Inhibited by sucrose. In terms of biological role, hydrolyzes inulin-type beta-(2,1)-fructans. May play a role as a beta-(2,1)-trimmer during graminan biosynthesis. The polypeptide is Fructan 1-exohydrolase (Leymus chinensis (Chinese lyme grass)).